We begin with the raw amino-acid sequence, 302 residues long: Sulfate adenylyltransferase subunit 2 (302 aa).

The protein belongs to the PAPS reductase family. CysD subfamily. Heterodimer composed of CysD, the smaller subunit, and CysN.

The enzyme catalyses sulfate + ATP + H(+) = adenosine 5'-phosphosulfate + diphosphate. It functions in the pathway sulfur metabolism; hydrogen sulfide biosynthesis; sulfite from sulfate: step 1/3. Functionally, with CysN forms the ATP sulfurylase (ATPS) that catalyzes the adenylation of sulfate producing adenosine 5'-phosphosulfate (APS) and diphosphate, the first enzymatic step in sulfur assimilation pathway. APS synthesis involves the formation of a high-energy phosphoric-sulfuric acid anhydride bond driven by GTP hydrolysis by CysN coupled to ATP hydrolysis by CysD. The polypeptide is Sulfate adenylyltransferase subunit 2 (Escherichia coli O1:K1 / APEC).